The chain runs to 1597 residues: Pentafunctional AROM polypeptide (1597 aa).

A 3-dehydroquinate synthase region spans residues 1-384 (MGVPTKISIL…HEPRASTVSN (384 aa)). NAD(+)-binding positions include 44–46 (DTN), 81–84 (ESSK), 114–116 (GGV), and aspartate 119. Arginine 130 is a 7-phospho-2-dehydro-3-deoxy-D-arabino-heptonate binding site. 139-140 (TT) is an NAD(+) binding site. Aspartate 146 and lysine 152 together coordinate 7-phospho-2-dehydro-3-deoxy-D-arabino-heptonate. Lysine 161 contributes to the NAD(+) binding site. Asparagine 162 contributes to the 7-phospho-2-dehydro-3-deoxy-D-arabino-heptonate binding site. Residues 179 to 182 (FLNT) and asparagine 190 each bind NAD(+). Position 194 (glutamate 194) interacts with Zn(2+). Residues 194 to 197 (EVIK) and lysine 250 each bind 7-phospho-2-dehydro-3-deoxy-D-arabino-heptonate. Glutamate 260 serves as the catalytic Proton acceptor; for 3-dehydroquinate synthase activity. 7-phospho-2-dehydro-3-deoxy-D-arabino-heptonate-binding positions include 264 to 268 (RNLLN) and histidine 271. Residue histidine 271 coordinates Zn(2+). The active-site Proton acceptor; for 3-dehydroquinate synthase activity is the histidine 275. 2 residues coordinate 7-phospho-2-dehydro-3-deoxy-D-arabino-heptonate: histidine 287 and lysine 356. Histidine 287 contacts Zn(2+). The interval 397-842 (VSPGVPKNLN…WDSLAQTFKV (446 aa)) is EPSP synthase. Cysteine 824 (for EPSP synthase activity) is an active-site residue. Residues 866–1057 (ASIFIIGMRG…RSKENTFFVS (192 aa)) form a shikimate kinase region. 872–879 (GMRGAGKT) is an ATP binding site. The interval 1058-1278 (LTLPDLAPAA…AAPGQLSARE (221 aa)) is 3-dehydroquinase. The active-site Proton acceptor; for 3-dehydroquinate dehydratase activity is the histidine 1181. Catalysis depends on lysine 1209, which acts as the Schiff-base intermediate with substrate; for 3-dehydroquinate dehydratase activity. Residues 1291-1597 (SKKFAVIGNP…VQPKDDDIST (307 aa)) form a shikimate dehydrogenase region.

In the N-terminal section; belongs to the sugar phosphate cyclases superfamily. Dehydroquinate synthase family. The protein in the 2nd section; belongs to the EPSP synthase family. This sequence in the 3rd section; belongs to the shikimate kinase family. It in the 4th section; belongs to the type-I 3-dehydroquinase family. In the C-terminal section; belongs to the shikimate dehydrogenase family. Homodimer. Zn(2+) is required as a cofactor.

It is found in the cytoplasm. The catalysed reaction is 7-phospho-2-dehydro-3-deoxy-D-arabino-heptonate = 3-dehydroquinate + phosphate. The enzyme catalyses 3-dehydroquinate = 3-dehydroshikimate + H2O. It catalyses the reaction shikimate + NADP(+) = 3-dehydroshikimate + NADPH + H(+). It carries out the reaction shikimate + ATP = 3-phosphoshikimate + ADP + H(+). The catalysed reaction is 3-phosphoshikimate + phosphoenolpyruvate = 5-O-(1-carboxyvinyl)-3-phosphoshikimate + phosphate. The protein operates within metabolic intermediate biosynthesis; chorismate biosynthesis; chorismate from D-erythrose 4-phosphate and phosphoenolpyruvate: step 2/7. Its pathway is metabolic intermediate biosynthesis; chorismate biosynthesis; chorismate from D-erythrose 4-phosphate and phosphoenolpyruvate: step 3/7. It participates in metabolic intermediate biosynthesis; chorismate biosynthesis; chorismate from D-erythrose 4-phosphate and phosphoenolpyruvate: step 4/7. It functions in the pathway metabolic intermediate biosynthesis; chorismate biosynthesis; chorismate from D-erythrose 4-phosphate and phosphoenolpyruvate: step 5/7. The protein operates within metabolic intermediate biosynthesis; chorismate biosynthesis; chorismate from D-erythrose 4-phosphate and phosphoenolpyruvate: step 6/7. The AROM polypeptide catalyzes 5 consecutive enzymatic reactions in prechorismate polyaromatic amino acid biosynthesis. This Blastomyces gilchristii (strain SLH14081) (Blastomyces dermatitidis) protein is Pentafunctional AROM polypeptide.